A 482-amino-acid polypeptide reads, in one-letter code: UDP-N-acetylmuramate--L-alanine ligase (482 aa).

ATP is bound at residue 123–129 (GTHGKTT).

The protein belongs to the MurCDEF family.

It is found in the cytoplasm. The enzyme catalyses UDP-N-acetyl-alpha-D-muramate + L-alanine + ATP = UDP-N-acetyl-alpha-D-muramoyl-L-alanine + ADP + phosphate + H(+). It functions in the pathway cell wall biogenesis; peptidoglycan biosynthesis. Its function is as follows. Cell wall formation. This chain is UDP-N-acetylmuramate--L-alanine ligase, found in Pseudomonas putida (strain ATCC 47054 / DSM 6125 / CFBP 8728 / NCIMB 11950 / KT2440).